The chain runs to 397 residues: S-adenosylmethionine synthase (397 aa).

ATP is bound at residue His15. A Mg(2+)-binding site is contributed by Asp17. Glu43 lines the K(+) pocket. L-methionine is bound by residues Glu56 and Gln99. Residues 99 to 109 (QSGDIAMGVDE) are flexible loop. Residues 175 to 177 (DGK), 241 to 242 (RF), Asp250, 256 to 257 (RK), Ala273, and Lys277 contribute to the ATP site. Asp250 is a binding site for L-methionine. Residue Lys281 participates in L-methionine binding.

Belongs to the AdoMet synthase family. As to quaternary structure, homotetramer; dimer of dimers. It depends on Mg(2+) as a cofactor. The cofactor is K(+).

Its subcellular location is the cytoplasm. The catalysed reaction is L-methionine + ATP + H2O = S-adenosyl-L-methionine + phosphate + diphosphate. It functions in the pathway amino-acid biosynthesis; S-adenosyl-L-methionine biosynthesis; S-adenosyl-L-methionine from L-methionine: step 1/1. Functionally, catalyzes the formation of S-adenosylmethionine (AdoMet) from methionine and ATP. The overall synthetic reaction is composed of two sequential steps, AdoMet formation and the subsequent tripolyphosphate hydrolysis which occurs prior to release of AdoMet from the enzyme. The chain is S-adenosylmethionine synthase from Clostridioides difficile (strain 630) (Peptoclostridium difficile).